The sequence spans 396 residues: Protein btn1 (396 aa).

A run of 8 helical transmembrane segments spans residues 15 to 35, 45 to 65, 76 to 96, 138 to 158, 161 to 181, 234 to 254, 296 to 316, and 321 to 341; these read CFLI…SAAL, GVVL…ASIL, IGFC…SSSV, LAGL…NFSV, TLII…FVLP, FLVY…LLFP, LAIT…LYLT, and FVLF…VNVY.

Belongs to the battenin family.

The protein localises to the endoplasmic reticulum membrane. It localises to the vacuole membrane. Functionally, involved in vacuolar transport and vacuole pH homeostasis. Also required for cytokinesis. This chain is Protein btn1, found in Schizosaccharomyces pombe (strain 972 / ATCC 24843) (Fission yeast).